The chain runs to 206 residues: Transmembrane emp24 domain-containing protein bai (206 aa).

The N-terminal stretch at 1–20 is a signal peptide; the sequence is MLKSLLCILLIFGCLCRIHG. At 21 to 172 the chain is on the lumenal side; the sequence is VMFHLTPNTQ…RDTNEKTNSR (152 aa). The GOLD domain maps to 30-140; it reads QKCLKEDIQA…LKPLEVDLKR (111 aa). The chain crosses the membrane as a helical span at residues 173–193; the sequence is VLFFSIFSMCCLLGLATWQVL. Over 194–206 the chain is Cytoplasmic; it reads YLRRYFKAKKLIE.

It belongs to the EMP24/GP25L family.

It localises to the membrane. Eca and bai are essential, though not redundant, for dorsoventral patterning of the embryo. Specifically required during early embryogenesis for the activity of maternal tkv, while the zygotic tkv is not affected. This chain is Transmembrane emp24 domain-containing protein bai, found in Drosophila grimshawi (Hawaiian fruit fly).